Consider the following 239-residue polypeptide: Demethylmenaquinone methyltransferase (239 aa).

S-adenosyl-L-methionine-binding positions include threonine 60, aspartate 81, and aspartate 106–alanine 107.

It belongs to the class I-like SAM-binding methyltransferase superfamily. MenG/UbiE family.

The catalysed reaction is a 2-demethylmenaquinol + S-adenosyl-L-methionine = a menaquinol + S-adenosyl-L-homocysteine + H(+). It functions in the pathway quinol/quinone metabolism; menaquinone biosynthesis; menaquinol from 1,4-dihydroxy-2-naphthoate: step 2/2. In terms of biological role, methyltransferase required for the conversion of demethylmenaquinol (DMKH2) to menaquinol (MKH2). The protein is Demethylmenaquinone methyltransferase of Staphylococcus haemolyticus (strain JCSC1435).